A 352-amino-acid polypeptide reads, in one-letter code: Organic solute transporter subunit alpha (352 aa).

Topologically, residues 1-45 are extracellular; that stretch reads MDVAHPEEVTRFSPDILMEKFNVSEACFLPPPISIQLILQLTWLD. Asn-22 carries an N-linked (GlcNAc...) asparagine glycan. Residues 46–66 traverse the membrane as a helical segment; that stretch reads IGVFAALTAMTVLTIAIYLEI. The Cytoplasmic portion of the chain corresponds to 67 to 82; the sequence is VCYLMDKVKCPIKRKT. The chain crosses the membrane as a helical span at residues 83-103; sequence LMWNSAAPTVIAITSCLGLWV. Residues 104 to 108 are Extracellular-facing; the sequence is PRAIM. The chain crosses the membrane as a helical span at residues 109-129; that stretch reads FVDMAAAMYFGVGFYLMLLII. Residues 130–173 lie on the Cytoplasmic side of the membrane; sequence VQGYGGEEAMLQHLATHTIRISTGPCCCCCPCLPHIHLTRQKYK. The helical transmembrane segment at 174-194 threads the bilayer; sequence IFVLGAFQVAFLRPALFLLGV. Topologically, residues 195–210 are extracellular; sequence VLWTNGLYDPDDWSST. Residues 211–231 traverse the membrane as a helical segment; sequence SIFLWLNLFLGVSTILGLWPV. Residues 232 to 250 lie on the Cytoplasmic side of the membrane; that stretch reads NVLFRHSKVLMADQKLTCK. The chain crosses the membrane as a helical span at residues 251–271; sequence FALFQAILILSSLQNSIIGTL. At 272–294 the chain is on the extracellular side; it reads AGAGHIGCAPPYSARTRGQQMNN. Residues 295-312 traverse the membrane as a helical segment; the sequence is QLLIIEMFFVGILTRISY. Residues 313 to 352 lie on the Cytoplasmic side of the membrane; sequence RKRDDRPGHRHVGEVQQIVRECDQPAIADQQADHSSISHI.

Belongs to the OST-alpha family. Interacts with slc51b. The Ost-alpha/Ost-beta complex is a heterodimer composed of alpha (slc51a) and beta (slc51b) subunit. Expressed in liver.

It is found in the cell membrane. The protein resides in the endoplasmic reticulum membrane. It catalyses the reaction taurocholate(out) = taurocholate(in). It carries out the reaction prostaglandin E2(out) = prostaglandin E2(in). The catalysed reaction is estrone 3-sulfate(out) = estrone 3-sulfate(in). The enzyme catalyses dehydroepiandrosterone 3-sulfate(out) = dehydroepiandrosterone 3-sulfate(in). It catalyses the reaction tauroursodeoxycholate(out) = tauroursodeoxycholate(in). It carries out the reaction glycoursodeoxycholate(out) = glycoursodeoxycholate(in). The catalysed reaction is glycocholate(out) = glycocholate(in). The enzyme catalyses taurochenodeoxycholate(out) = taurochenodeoxycholate(in). It catalyses the reaction glycochenodeoxycholate(out) = glycochenodeoxycholate(in). It carries out the reaction taurodeoxycholate(out) = taurodeoxycholate(in). The catalysed reaction is glycodeoxycholate(out) = glycodeoxycholate(in). Functionally, essential component of the Ost-alpha/Ost-beta complex, a heterodimer that acts as the intestinal basolateral transporter responsible for the translocation of bile acids (such as taurocholate), steroids (such as estrone sulfate), and eicosanoids (such as prostaglandin E2). The protein is Organic solute transporter subunit alpha (slc51a) of Leucoraja erinaceus (Little skate).